Reading from the N-terminus, the 553-residue chain is Hydroxylamine reductase (553 aa).

Positions 3, 6, 15, and 21 each coordinate [4Fe-4S] cluster. Residues His-244, Glu-268, Cys-312, Cys-406, Cys-434, Cys-459, Glu-494, and Lys-496 each contribute to the hybrid [4Fe-2O-2S] cluster site. Cys-406 is subject to Cysteine persulfide.

The protein belongs to the HCP family. In terms of assembly, monomer. [4Fe-4S] cluster is required as a cofactor. Requires hybrid [4Fe-2O-2S] cluster as cofactor.

Its subcellular location is the cytoplasm. It carries out the reaction A + NH4(+) + H2O = hydroxylamine + AH2 + H(+). Its function is as follows. Catalyzes the reduction of hydroxylamine to form NH(3) and H(2)O. The polypeptide is Hydroxylamine reductase (Nitratidesulfovibrio vulgaris (strain ATCC 29579 / DSM 644 / CCUG 34227 / NCIMB 8303 / VKM B-1760 / Hildenborough) (Desulfovibrio vulgaris)).